The following is a 169-amino-acid chain: Styrene-oxide isomerase (169 aa).

A run of 4 helical transmembrane segments spans residues 13–33 (GILMIFCTLLFGVGLWMHLVG), 61–81 (PALNGMMVIAVAFVLPSLGFA), 85–105 (PHLLGNIIILDGWANVGFYFF), and 129–149 (FLALAPAYLFGVLAMGALAVI).

The protein localises to the membrane. The catalysed reaction is styrene oxide = 2-phenylacetaldehyde. It participates in aromatic compound metabolism. In terms of biological role, epoxystyrene isomerase that catalyzes the second step in the aerobic styrene degradation pathway by converting epoxystyrene to phenylacetaldehyde. The polypeptide is Styrene-oxide isomerase (styC) (Pseudomonas fluorescens).